The following is a 626-amino-acid chain: DNA mismatch repair protein MutL (626 aa).

2 disordered regions span residues 385-413 (SGASVPPPSIDPVESSFGSGSGEPYPSMV) and 418-437 (LTPSADQPSAADEQNPVAPD).

Belongs to the DNA mismatch repair MutL/HexB family.

Its function is as follows. This protein is involved in the repair of mismatches in DNA. It is required for dam-dependent methyl-directed DNA mismatch repair. May act as a 'molecular matchmaker', a protein that promotes the formation of a stable complex between two or more DNA-binding proteins in an ATP-dependent manner without itself being part of a final effector complex. This Chlorobaculum parvum (strain DSM 263 / NCIMB 8327) (Chlorobium vibrioforme subsp. thiosulfatophilum) protein is DNA mismatch repair protein MutL.